The sequence spans 379 residues: Alcohol dehydrogenase class-3 (379 aa).

An N-acetylserine modification is found at S2. C48, H70, C100, C103, C106, C114, and C177 together coordinate Zn(2+).

Belongs to the zinc-containing alcohol dehydrogenase family. Class-III subfamily. The cofactor is Zn(2+).

It catalyses the reaction a primary alcohol + NAD(+) = an aldehyde + NADH + H(+). The enzyme catalyses a secondary alcohol + NAD(+) = a ketone + NADH + H(+). The catalysed reaction is S-(hydroxymethyl)glutathione + NADP(+) = S-formylglutathione + NADPH + H(+). It carries out the reaction S-(hydroxymethyl)glutathione + NAD(+) = S-formylglutathione + NADH + H(+). It catalyses the reaction octan-1-ol + NAD(+) = octanal + NADH + H(+). Functionally, class-III ADH is remarkably ineffective in oxidizing ethanol, but it readily catalyzes the oxidation of long-chain primary alcohols and the oxidation of S-(hydroxymethyl) glutathione. The sequence is that of Alcohol dehydrogenase class-3 (Fdh) from Drosophila melanogaster (Fruit fly).